A 718-amino-acid polypeptide reads, in one-letter code: Ribosomal RNA large subunit methyltransferase K/L (718 aa).

A THUMP domain is found at 44–155; the sequence is DAYKVCIYSH…KQYVNVFLCL (112 aa).

This sequence belongs to the methyltransferase superfamily. RlmKL family.

It localises to the cytoplasm. The catalysed reaction is guanosine(2445) in 23S rRNA + S-adenosyl-L-methionine = N(2)-methylguanosine(2445) in 23S rRNA + S-adenosyl-L-homocysteine + H(+). It carries out the reaction guanosine(2069) in 23S rRNA + S-adenosyl-L-methionine = N(2)-methylguanosine(2069) in 23S rRNA + S-adenosyl-L-homocysteine + H(+). Its function is as follows. Specifically methylates the guanine in position 2445 (m2G2445) and the guanine in position 2069 (m7G2069) of 23S rRNA. This Francisella philomiragia subsp. philomiragia (strain ATCC 25017 / CCUG 19701 / FSC 153 / O#319-036) protein is Ribosomal RNA large subunit methyltransferase K/L.